The primary structure comprises 219 residues: Orotate phosphoribosyltransferase (219 aa).

Lys-26 contributes to the 5-phospho-alpha-D-ribose 1-diphosphate binding site. 34-35 (FF) serves as a coordination point for orotate. 5-phospho-alpha-D-ribose 1-diphosphate is bound by residues 72 to 73 (YK), Arg-98, Lys-99, Lys-102, His-104, and 124 to 132 (DDVITAGTA). Thr-128 and Arg-156 together coordinate orotate.

It belongs to the purine/pyrimidine phosphoribosyltransferase family. PyrE subfamily. Homodimer. Mg(2+) is required as a cofactor.

The catalysed reaction is orotidine 5'-phosphate + diphosphate = orotate + 5-phospho-alpha-D-ribose 1-diphosphate. The protein operates within pyrimidine metabolism; UMP biosynthesis via de novo pathway; UMP from orotate: step 1/2. Its function is as follows. Catalyzes the transfer of a ribosyl phosphate group from 5-phosphoribose 1-diphosphate to orotate, leading to the formation of orotidine monophosphate (OMP). This Stenotrophomonas maltophilia (strain K279a) protein is Orotate phosphoribosyltransferase.